The primary structure comprises 89 residues: Putative regulatory protein CYB_0055 (89 aa).

It belongs to the RemA family.

The chain is Putative regulatory protein CYB_0055 from Synechococcus sp. (strain JA-2-3B'a(2-13)) (Cyanobacteria bacterium Yellowstone B-Prime).